A 61-amino-acid chain; its full sequence is Small ribosomal subunit protein uS14 (61 aa).

Zn(2+) contacts are provided by Cys-24, Cys-27, Cys-40, and Cys-43.

It belongs to the universal ribosomal protein uS14 family. Zinc-binding uS14 subfamily. Part of the 30S ribosomal subunit. Contacts proteins S3 and S10. It depends on Zn(2+) as a cofactor.

Functionally, binds 16S rRNA, required for the assembly of 30S particles and may also be responsible for determining the conformation of the 16S rRNA at the A site. This chain is Small ribosomal subunit protein uS14, found in Pseudothermotoga lettingae (strain ATCC BAA-301 / DSM 14385 / NBRC 107922 / TMO) (Thermotoga lettingae).